The sequence spans 313 residues: D-apiose import binding protein (313 aa).

An N-terminal signal peptide occupies residues 1–26 (MKLTRRLTLAAFASALALGTAMPAFA). D-apiofuranose contacts are provided by residues Asn-39, 115–116 (DR), 162–164 (DTN), Arg-168, Asn-218, Asp-243, and Gln-263.

It belongs to the bacterial solute-binding protein 2 family.

The protein localises to the periplasm. Part of an ABC transporter complex involved in D-apiose import. Binds D-apiose, D-ribose and D-ribulose. The polypeptide is D-apiose import binding protein (Rhizobium etli (strain ATCC 51251 / DSM 11541 / JCM 21823 / NBRC 15573 / CFN 42)).